A 164-amino-acid chain; its full sequence is Diphosphoinositol polyphosphate phosphohydrolase 3-alpha (164 aa).

Substrate contacts are provided by residues Arg9, 17-19 (KKR), and 38-40 (SSR). In terms of domain architecture, Nudix hydrolase spans 17–144 (KKRAACLCFR…VHAEYLEKLK (128 aa)). Mg(2+)-binding residues include Gly49 and Glu65. The short motif at 50 to 71 (GGMEPEEEPDGAAVREVYEEAG) is the Nudix box element. Catalysis depends on Glu68, which acts as the Proton acceptor. Residue Glu69 coordinates Mg(2+). Substrate-binding positions include 89–91 (RKH), Arg115, and Lys133. A disordered region spans residues 144–164 (KLGGSPTNGNSAAPSPPESEP).

The protein belongs to the Nudix hydrolase family. DIPP subfamily. Requires Mg(2+) as cofactor. It depends on Mn(2+) as a cofactor. As to expression, mainly expressed in testis, liver kidney and, at lower level, in heart, brain, spleen, lung and skeletal muscle.

Its subcellular location is the cytoplasm. It catalyses the reaction diphospho-myo-inositol polyphosphate + H2O = myo-inositol polyphosphate + phosphate.. The enzyme catalyses P(1),P(6)-bis(5'-adenosyl) hexaphosphate + H2O = adenosine 5'-pentaphosphate + AMP + 2 H(+). The catalysed reaction is P(1),P(5)-bis(5'-adenosyl) pentaphosphate + H2O = adenosine 5'-tetraphosphate + AMP + 2 H(+). Functionally, cleaves a beta-phosphate from the diphosphate groups in PP-InsP5 (diphosphoinositol pentakisphosphate), suggesting that it may play a role in signal transduction. Also able to catalyze the hydrolysis of dinucleoside oligophosphates, with Ap6A and Ap5A being the preferred substrates. The major reaction products are ADP and p4a from Ap6A and ADP and ATP from Ap5A. Also able to hydrolyze 5-phosphoribose 1-diphosphate; however, the relevance of such activity in vivo remains unclear. The chain is Diphosphoinositol polyphosphate phosphohydrolase 3-alpha from Mus musculus (Mouse).